Consider the following 57-residue polypeptide: Conotoxin Cal6.34 (57 aa).

The signal sequence occupies residues 1 to 22; the sequence is MKLTCVLIVAVLILTACQVIAA. 3 disulfides stabilise this stretch: C26–C37, C29–C43, and C36–C54.

Belongs to the conotoxin O1 superfamily. As to expression, expressed by the venom duct.

The protein localises to the secreted. Functionally, probable neurotoxin. The protein is Conotoxin Cal6.34 of Californiconus californicus (California cone).